Here is a 318-residue protein sequence, read N- to C-terminus: MALENLLHPTNIKIDEYAKNATKFSFEALERGVGYTLGFALKQTMLYSIAGACVTSIKINDGKVTSLEDVIPCDETVADIILNVKSLPVTLAEGVETGTITFELSGSEEEIFSEEAKLSEGLAITEEVFICSYNGGKKLKIEAKVEKGVGFRPAQDNFKDGEFLLDATFSPVVFCDFEIKDARVGRRTDLDKLELNIKTNGNVNCEEALRLAATKIQNQLRNILDIEEINKGIFVEDPTKDINPILLKHVEELNLTARSSNCLKAVNIRLIGELVQKTENELLKAPNFGKKSLTEIKDKLSELGLSLGTLIENWPQDL.

The tract at residues 1–227 is alpha N-terminal domain (alpha-NTD); the sequence is MALENLLHPT…NQLRNILDIE (227 aa). The alpha C-terminal domain (alpha-CTD) stretch occupies residues 242-318; that stretch reads INPILLKHVE…TLIENWPQDL (77 aa).

The protein belongs to the RNA polymerase alpha chain family. As to quaternary structure, homodimer. The RNAP catalytic core consists of 2 alpha, 1 beta, 1 beta' and 1 omega subunit. When a sigma factor is associated with the core the holoenzyme is formed, which can initiate transcription.

It carries out the reaction RNA(n) + a ribonucleoside 5'-triphosphate = RNA(n+1) + diphosphate. In terms of biological role, DNA-dependent RNA polymerase catalyzes the transcription of DNA into RNA using the four ribonucleoside triphosphates as substrates. The sequence is that of DNA-directed RNA polymerase subunit alpha 2 from Francisella tularensis subsp. tularensis (strain FSC 198).